The chain runs to 105 residues: MTEALTHVIDHEGQGTPATVRLTVLPSGHTRVGVTDPDPRVPPLLPGPAGVTDESGRGLALLDAPAPRWGVEQRGDRRAVRCEPAGEPPLDDVRTPAAPAVRSGR.

Disordered stretches follow at residues 29–55 (HTRV…TDES) and 72–105 (EQRG…RSGR). The span at 72 to 81 (EQRGDRRAVR) shows a compositional bias: basic and acidic residues.

This is an uncharacterized protein from Streptomyces coelicolor (strain ATCC BAA-471 / A3(2) / M145).